Consider the following 149-residue polypeptide: MTESDTKITLIGSRLAREGLEFIFKGEMPECKKCRLKNTCLNLEPGRRYRVERIRNKDIHECFLHDSGVVAVDVSKAPILTTLESRKAVDGAKIMYEPPKCGKRECEIYEICHPEGLSRGDKCKIVEVLENLDSKCEANYSLKKVKLSW.

It belongs to the UPF0179 family.

The chain is UPF0179 protein Mbar_A0292 from Methanosarcina barkeri (strain Fusaro / DSM 804).